Consider the following 227-residue polypeptide: Cytidylate kinase (227 aa).

Gly12–Thr20 lines the ATP pocket.

The protein belongs to the cytidylate kinase family. Type 1 subfamily.

The protein resides in the cytoplasm. It carries out the reaction CMP + ATP = CDP + ADP. The catalysed reaction is dCMP + ATP = dCDP + ADP. This is Cytidylate kinase from Shigella sonnei (strain Ss046).